The following is a 659-amino-acid chain: Interferon-induced GTP-binding protein Mx3 (659 aa).

The Dynamin-type G domain maps to 65–338 (DLALPAIAVI…LISHICKSLP (274 aa)). Positions 75-82 (GDQSSGKS) are G1 motif. 75–82 (GDQSSGKS) contributes to the GTP binding site. The tract at residues 100–102 (VTR) is G2 motif. The segment at 176-179 (DLPG) is G3 motif. GTP-binding positions include 176-180 (DLPGI) and 245-248 (TKPD). Residues 245–248 (TKPD) are G4 motif. Positions 277–280 (KCRG) are G5 motif. Positions 547-568 (EAEEEERKHGKSRSAQSPNLQT) are disordered. Over residues 559-568 (RSAQSPNLQT) the composition is skewed to polar residues. In terms of domain architecture, GED spans 571-659 (MDEIFQHLNA…AQRRLAKFPG (89 aa)).

It belongs to the TRAFAC class dynamin-like GTPase superfamily. Dynamin/Fzo/YdjA family.

It is found in the cytoplasm. Functionally, does not show activity against influenza virus or VSV; although it only differs from Mx2 by 8 positions. In Rattus norvegicus (Rat), this protein is Interferon-induced GTP-binding protein Mx3 (Mx3).